The sequence spans 310 residues: UPF0761 membrane protein VFMJ11_0098 (310 aa).

6 consecutive transmembrane segments (helical) span residues 34–54 (YMAY…LSVL), 97–117 (MTAV…SSID), 136–156 (FSLY…SLAA), 178–198 (LLGW…YLLV), 207–227 (HALI…VGFA), and 242–262 (ALAA…IVLI).

It belongs to the UPF0761 family.

The protein localises to the cell inner membrane. The chain is UPF0761 membrane protein VFMJ11_0098 from Aliivibrio fischeri (strain MJ11) (Vibrio fischeri).